We begin with the raw amino-acid sequence, 201 residues long: Small ribosomal subunit protein uS4c (201 aa).

The segment at 20-43 (GLTSKRPRAGSDLRNQSRSGKRSQ) is disordered. Residues 89-149 (MRLDNILFRL…NEQKSRALIQ (61 aa)) form the S4 RNA-binding domain.

It belongs to the universal ribosomal protein uS4 family. As to quaternary structure, part of the 30S ribosomal subunit. Contacts protein S5. The interaction surface between S4 and S5 is involved in control of translational fidelity.

Its subcellular location is the plastid. It is found in the chloroplast. One of the primary rRNA binding proteins, it binds directly to 16S rRNA where it nucleates assembly of the body of the 30S subunit. Functionally, with S5 and S12 plays an important role in translational accuracy. The sequence is that of Small ribosomal subunit protein uS4c (rps4) from Vitis vinifera (Grape).